A 1098-amino-acid polypeptide reads, in one-letter code: Unconventional myosin-If (1098 aa).

The Myosin motor domain occupies Ser17 to Glu690. Residue Gly110 to Thr117 participates in ATP binding. Positions Pro579–Glu589 are actin-binding. Residues Phe693 to Asn722 form the IQ domain. In terms of domain architecture, TH1 spans Lys728–Asp917. Disordered stretches follow at residues Val913–Asn1009 and Lys1021–Pro1044. Residues Lys924–Arg937 show a composition bias toward basic residues. Position 1023 is a phosphoserine (Ser1023). The region spanning Thr1041–Ile1098 is the SH3 domain.

This sequence belongs to the TRAFAC class myosin-kinesin ATPase superfamily. Myosin family.

Myosins are actin-based motor molecules with ATPase activity. Unconventional myosins serve in intracellular movements. Their highly divergent tails are presumed to bind to membranous compartments, which would be moved relative to actin filaments. This Homo sapiens (Human) protein is Unconventional myosin-If (MYO1F).